We begin with the raw amino-acid sequence, 535 residues long: Keratin, type II cytoskeletal 79 (535 aa).

Residues 1–12 (MRSSVSRQTYST) show a composition bias toward polar residues. Residues 1-52 (MRSSVSRQTYSTKGGFSSNSASGGSGSQARTSFSSVTVSRSSGSGGGAHCGP) form a disordered region. The interval 1-141 (MRSSVSRQTY…DPEIQRVRTQ (141 aa)) is head. Low complexity predominate over residues 32–42 (SFSSVTVSRSS). The span at 43–52 (GSGGGAHCGP) shows a compositional bias: gly residues. The interval 142-177 (EREQIKTLNNKFASFIDKVRFLEQQNKVLETKWALL) is coil 1A. The IF rod domain occupies 142-457 (EREQIKTLNN…KLLESEESRM (316 aa)). Positions 178-198 (QEQGQNLGVTRNNLEPLFEAY) are linker 1. The interval 199-290 (LGSMRSTLDR…QLYEMELSQV (92 aa)) is coil 1B. Residues 291–314 (QTHVSNTNVVLSMDNNRNLDLDSI) are linker 12. Residues 315-453 (IAEVKAQYEL…ATYRKLLESE (139 aa)) form a coil 2 region. The tract at residues 454-535 (ESRMSGECPS…TTVKTSSQRY (82 aa)) is tail.

This sequence belongs to the intermediate filament family. As to quaternary structure, heterotetramer of two type I and two type II keratins. Expressed in skeletal muscle, skin and scalp, but not in any other tissues or organs examined.

The sequence is that of Keratin, type II cytoskeletal 79 (KRT79) from Homo sapiens (Human).